The primary structure comprises 206 residues: FMN-dependent NADH:quinone oxidoreductase 1 (206 aa).

FMN-binding positions include serine 9, 15-17 (SVS), and 139-142 (SRGG).

This sequence belongs to the azoreductase type 1 family. In terms of assembly, homodimer. It depends on FMN as a cofactor.

The catalysed reaction is 2 a quinone + NADH + H(+) = 2 a 1,4-benzosemiquinone + NAD(+). The enzyme catalyses N,N-dimethyl-1,4-phenylenediamine + anthranilate + 2 NAD(+) = 2-(4-dimethylaminophenyl)diazenylbenzoate + 2 NADH + 2 H(+). Quinone reductase that provides resistance to thiol-specific stress caused by electrophilic quinones. Functionally, also exhibits azoreductase activity. Catalyzes the reductive cleavage of the azo bond in aromatic azo compounds to the corresponding amines. This chain is FMN-dependent NADH:quinone oxidoreductase 1, found in Cupriavidus pinatubonensis (strain JMP 134 / LMG 1197) (Cupriavidus necator (strain JMP 134)).